A 20-amino-acid polypeptide reads, in one-letter code: Juvenile hormone-binding protein (20 aa).

It is found in the secreted. In terms of biological role, prevents juvenile hormone from being hydrolyzed by general esterases by combining with it specifically. The polypeptide is Juvenile hormone-binding protein (JHBP) (Bombyx mori (Silk moth)).